Reading from the N-terminus, the 241-residue chain is Zinc finger CCHC domain-containing protein 17 (241 aa).

An S1 motif domain is found at 16–88; that stretch reads YTIFQGEVAM…DRIKVSLSMK (73 aa). S114 bears the Phosphoserine mark. The CCHC-type zinc finger occupies 131-148; it reads TTCKKCGCKGHFAKDCFM. K144 is subject to N6-acetyllysine. Positions 161-241 are disordered; that stretch reads EEEEKEEAKS…KKKHKKKHKE (81 aa). The segment covering 166-178 has biased composition (basic and acidic residues); that stretch reads EEAKSAEFEKPDP. Residues 182-198 are compositionally biased toward basic residues; sequence PSRKRKKEKKKKKHRDR. A Phosphoserine modification is found at S183. The segment covering 211–225 has biased composition (basic and acidic residues); the sequence is DTGKRARHTSKDSKA. The segment covering 226–241 has biased composition (basic residues); that stretch reads AKKKKKKKKHKKKHKE.

As to quaternary structure, interacts with PNN. Associates with the 60S ribosomal subunit.

It is found in the nucleus. The protein localises to the nucleolus. The chain is Zinc finger CCHC domain-containing protein 17 (ZCCHC17) from Homo sapiens (Human).